The following is a 237-amino-acid chain: Phosphoribosylaminoimidazole-succinocarboxamide synthase (237 aa).

This sequence belongs to the SAICAR synthetase family.

The catalysed reaction is 5-amino-1-(5-phospho-D-ribosyl)imidazole-4-carboxylate + L-aspartate + ATP = (2S)-2-[5-amino-1-(5-phospho-beta-D-ribosyl)imidazole-4-carboxamido]succinate + ADP + phosphate + 2 H(+). The protein operates within purine metabolism; IMP biosynthesis via de novo pathway; 5-amino-1-(5-phospho-D-ribosyl)imidazole-4-carboxamide from 5-amino-1-(5-phospho-D-ribosyl)imidazole-4-carboxylate: step 1/2. The sequence is that of Phosphoribosylaminoimidazole-succinocarboxamide synthase from Hamiltonella defensa subsp. Acyrthosiphon pisum (strain 5AT).